The primary structure comprises 217 residues: Growth hormone variant (217 aa).

An N-terminal signal peptide occupies residues 1–26 (MAAGSWTCLILAIALLCLPWLQEGSA). Disulfide bonds link Cys-79/Cys-191 and Cys-208/Cys-215. Ser-132 and Ser-176 each carry phosphoserine.

It belongs to the somatotropin/prolactin family. Expressed in the placenta.

The protein localises to the secreted. In terms of biological role, plays an important role in growth control. Its major role in stimulating body growth is to stimulate the liver and other tissues to secrete IGF1. It stimulates both the differentiation and proliferation of myoblasts. It also stimulates amino acid uptake and protein synthesis in muscle and other tissues. The chain is Growth hormone variant (GH2) from Macaca mulatta (Rhesus macaque).